The primary structure comprises 309 residues: Wall-associated proteinase (309 aa).

Asparagine 190 and asparagine 295 each carry an N-linked (GlcNAc...) asparagine glycan.

It is found in the secreted. The protein resides in the cell wall. Its subcellular location is the membrane. Its function is as follows. May participate in wall plasticization and/or intussusception or in cell wall turnover. The chain is Wall-associated proteinase from Coccidioides immitis (strain RS) (Valley fever fungus).